The chain runs to 374 residues: CC-adding tRNA nucleotidyltransferase (374 aa).

A CTP-binding site is contributed by 39-42 (GAVR). Mg(2+)-binding residues include aspartate 52 and aspartate 54. Residues 126–127 (RD), asparagine 131, 171–180 (DASRLVRAAR), and arginine 209 contribute to the CTP site.

It belongs to the tRNA nucleotidyltransferase/poly(A) polymerase family. It depends on Mg(2+) as a cofactor.

It catalyses the reaction a tRNA precursor + 2 CTP = a tRNA with a 3' CC end + 2 diphosphate. Its function is as follows. tRNA nucleotidyltransferase involved in the synthesis of the tRNA CCA terminus. Adds the two cytidine residues to tRNA. This chain is CC-adding tRNA nucleotidyltransferase, found in Deinococcus radiodurans (strain ATCC 13939 / DSM 20539 / JCM 16871 / CCUG 27074 / LMG 4051 / NBRC 15346 / NCIMB 9279 / VKM B-1422 / R1).